The following is a 1713-amino-acid chain: uncharacterized protein (1713 aa).

A compositionally biased stretch (polar residues) spans 1–12 (MNENEFSTNSLI). Disordered stretches follow at residues 1 to 35 (MNENEFSTNSLINQQGTNNNNNNNTNNNITNINFG), 79 to 200 (QQLN…KLSN), 226 to 290 (GNNN…QPLS), 309 to 557 (QYLS…PMSH), 713 to 734 (SNDQNDRVPIHQLGGATGKKDR), 808 to 952 (SPPM…SITT), and 1143 to 1190 (HHHH…SISR). Composition is skewed to low complexity over residues 13–35 (NQQGTNNNNNNNTNNNITNINFG), 79–109 (QQLNTPPTTPNTSTPSTPTSSRNNNNNNNNN), 126–170 (NNSG…NSGN), 177–200 (NMSDITNDNSNSSSNAGSNSKLSN), and 226–264 (GNNNYHNGNNENGNNTFHVGNNLNNNNNNNNIGSSGGNN). Basic residues predominate over residues 265 to 276 (SHHHHNHSHHNS). 2 stretches are compositionally biased toward low complexity: residues 317–470 (NNIN…SPAS) and 478–489 (SNNFGGNHNNYN). Positions 490-504 (HAHHSHHNNHAHHNT) are enriched in basic residues. Residues 505–553 (HNYNNNNNNNNNNNNNNNNNNNNSNNSNNNSNTNNNGNNGNNSNNNNNH) are compositionally biased toward low complexity. The NDT80 DNA-binding region spans 544–825 (GNNSNNNNNH…QNPGRFLNHD (282 aa)). The span at 822–832 (LNHDKSLKKDP) shows a compositional bias: basic and acidic residues. The segment covering 838–874 (GGKGGGGSGSGGMGGGMGGGMGNNGSSGSSSNGGYGN) has biased composition (gly residues). Low complexity-rich tracts occupy residues 898–946 (SPTT…PTLT) and 1148–1189 (QQQQ…SSIS). The Peptidase S74 domain maps to 1240-1355 (SDQRIKSNIR…RSLKKEKDHI (116 aa)). Helical transmembrane passes span 1416 to 1436 (TMFVFGFFIPICWIIGSFYLF), 1447 to 1467 (LMNFVATIIFILALSLMTFYV), and 1473 to 1493 (LIIAPALIVMGFVVCILVGFF). The segment covering 1596 to 1605 (NSNNNINNNN) has biased composition (low complexity). Disordered stretches follow at residues 1596 to 1634 (NSNNNINNNNQERLSDSSKSSFIDDFKKSSSNNHKDFHE) and 1646 to 1665 (IKGKKQSSSSAKTRSLSSSN). Residues 1617–1634 (FIDDFKKSSSNNHKDFHE) show a composition bias toward basic and acidic residues.

It is found in the membrane. This is an uncharacterized protein from Dictyostelium discoideum (Social amoeba).